The following is a 301-amino-acid chain: Pyridoxal 5'-phosphate synthase subunit Pdx1 (301 aa).

Asp26 is a binding site for D-ribose 5-phosphate. Catalysis depends on Lys83, which acts as the Schiff-base intermediate with D-ribose 5-phosphate. A D-ribose 5-phosphate-binding site is contributed by Gly155. Arg167 contributes to the D-glyceraldehyde 3-phosphate binding site. Residues Gly216 and 237-238 each bind D-ribose 5-phosphate; that span reads GS.

The protein belongs to the PdxS/SNZ family. As to quaternary structure, homohexamer and homododecamer. In the presence of Pdx2, forms a dodecamer of heterodimers.

The protein resides in the cytoplasm. It catalyses the reaction aldehydo-D-ribose 5-phosphate + D-glyceraldehyde 3-phosphate + L-glutamine = pyridoxal 5'-phosphate + L-glutamate + phosphate + 3 H2O + H(+). The protein operates within cofactor biosynthesis; pyridoxal 5'-phosphate biosynthesis. In terms of biological role, catalyzes the formation of pyridoxal 5'-phosphate from ribose 5-phosphate (RBP), glyceraldehyde 3-phosphate (G3P) and ammonia. The ammonia is provided by Pdx2. Can also use ribulose 5-phosphate and dihydroxyacetone phosphate as substrates, resulting from enzyme-catalyzed isomerization of RBP and G3P, respectively. The polypeptide is Pyridoxal 5'-phosphate synthase subunit Pdx1 (pdx1) (Plasmodium falciparum (isolate 3D7)).